The chain runs to 396 residues: 2-(3-amino-3-carboxypropyl)histidine synthase subunit 1 (396 aa).

Residues Cys-89, Cys-194, and Cys-323 each contribute to the [4Fe-4S] cluster site. Residues 372–396 (TNNNEANRPKREKRKPHIVVRTEAS) are disordered.

The protein belongs to the DPH1/DPH2 family. DPH1 subfamily. Component of the 2-(3-amino-3-carboxypropyl)histidine synthase complex composed of dph-1, dph-2, dph-3 and a NADH-dependent reductase. [4Fe-4S] cluster is required as a cofactor.

The enzyme catalyses L-histidyl-[translation elongation factor 2] + S-adenosyl-L-methionine = 2-[(3S)-amino-3-carboxypropyl]-L-histidyl-[translation elongation factor 2] + S-methyl-5'-thioadenosine + H(+). The protein operates within protein modification; peptidyl-diphthamide biosynthesis. Its function is as follows. Catalyzes the first step of diphthamide biosynthesis, a post-translational modification of histidine which occurs in elongation factor 2. Dph-1 and dph-2 transfer a 3-amino-3-carboxypropyl (ACP) group from S-adenosyl-L-methionine (SAM) to a histidine residue, the reaction is assisted by a reduction system comprising dph-3 and a NADH-dependent reductase. The sequence is that of 2-(3-amino-3-carboxypropyl)histidine synthase subunit 1 (dph-1) from Caenorhabditis elegans.